Consider the following 182-residue polypeptide: Malignant T-cell-amplified sequence 1 homolog (182 aa).

Residues 93–172 (VTMQQVDKGA…IGIETYHFLN (80 aa)) enclose the PUA domain.

Belongs to the MCTS1 family. In terms of assembly, interacts with DENR.

Its subcellular location is the cytoplasm. Functionally, regulates translation as part of a complex with DENR. Specifically required for translational re-initiation in mRNAs containing upstream open reading frames (uORFs). Not required for standard translational initiation. Regulates expression of a subset of gene products including mbc, InR and EcR. The protein is Malignant T-cell-amplified sequence 1 homolog of Drosophila melanogaster (Fruit fly).